A 378-amino-acid chain; its full sequence is D-alanine--D-alanine ligase (378 aa).

Residues 141–347 (KKLLTLNGIR…YSELIDQLIQ (207 aa)) enclose the ATP-grasp domain. 171–226 (AEELGETLFVKPARQGSSVGIHKVRNEEEYNAALEDGFKYDYKILVEEAIKNPREV) is a binding site for ATP. D301, E314, and N316 together coordinate Mg(2+).

Belongs to the D-alanine--D-alanine ligase family. Mg(2+) is required as a cofactor. The cofactor is Mn(2+).

Its subcellular location is the cytoplasm. The enzyme catalyses 2 D-alanine + ATP = D-alanyl-D-alanine + ADP + phosphate + H(+). Its pathway is cell wall biogenesis; peptidoglycan biosynthesis. Its function is as follows. Cell wall formation. The protein is D-alanine--D-alanine ligase of Ligilactobacillus salivarius (strain UCC118) (Lactobacillus salivarius).